The following is a 359-amino-acid chain: Aminomethyltransferase (359 aa).

The protein belongs to the GcvT family. The glycine cleavage system is composed of four proteins: P, T, L and H.

The enzyme catalyses N(6)-[(R)-S(8)-aminomethyldihydrolipoyl]-L-lysyl-[protein] + (6S)-5,6,7,8-tetrahydrofolate = N(6)-[(R)-dihydrolipoyl]-L-lysyl-[protein] + (6R)-5,10-methylene-5,6,7,8-tetrahydrofolate + NH4(+). Its function is as follows. The glycine cleavage system catalyzes the degradation of glycine. The chain is Aminomethyltransferase from Pseudoalteromonas atlantica (strain T6c / ATCC BAA-1087).